The primary structure comprises 139 residues: Histone H2A (139 aa).

The tract at residues 1 to 27 (MSGKGKAGKSGGKAGSETKSMSRSSKA) is disordered. Ser-2 carries the post-translational modification N-acetylserine. An N6-acetyllysine mark is found at Lys-9 and Lys-13. Residues 17-27 (ETKSMSRSSKA) are compositionally biased toward polar residues. Gln-110 bears the N5-methylglutamine mark. The tract at residues 119–139 (PELLPSKSSKGKKDEGVSQEL) is disordered. The span at 129 to 139 (GKKDEGVSQEL) shows a compositional bias: basic and acidic residues. Residue Ser-136 is modified to Phosphoserine. The [ST]-Q motif motif lies at 136–137 (SQ).

This sequence belongs to the histone H2A family. The nucleosome is a histone octamer containing two molecules each of H2A, H2B, H3 and H4 assembled in one H3-H4 heterotetramer and two H2A-H2B heterodimers. The octamer wraps approximately 147 bp of DNA. Phosphorylated to form H2AS128ph (gamma-H2A) in response to DNA double-strand breaks (DSBs) generated by exogenous genotoxic agents and by stalled replication forks. Phosphorylation is dependent on the DNA damage checkpoint kinases MEC1/ATR and TEL1/ATM, spreads on either side of a detected DSB site and may mark the surrounding chromatin for recruitment of proteins required for DNA damage signaling and repair. Gamma-H2A is removed from the DNA prior to the strand invasion-primer extension step of the repair process and subsequently dephosphorylated. Dephosphorylation is necessary for efficient recovery from the DNA damage checkpoint. In terms of processing, acetylated by ESA1 to form H2AK4ac and H2AK7ac.

It localises to the nucleus. Its subcellular location is the chromosome. Core component of nucleosome which plays a central role in DNA double strand break (DSB) repair. Nucleosomes wrap and compact DNA into chromatin, limiting DNA accessibility to the cellular machineries which require DNA as a template. Histones thereby play a central role in transcription regulation, DNA repair, DNA replication and chromosomal stability. DNA accessibility is regulated via a complex set of post-translational modifications of histones, also called histone code, and nucleosome remodeling. The chain is Histone H2A from Agaricus bisporus (White button mushroom).